Here is a 38-residue protein sequence, read N- to C-terminus: ATP synthase subunit O, mitochondrial (38 aa).

This sequence belongs to the ATPase delta chain family. F-type ATPases have 2 components, CF(1) - the catalytic core - and CF(0) - the membrane proton channel. CF(1) has five subunits: alpha(3), beta(3), gamma(1), delta(1), epsilon(1). CF(0) has three main subunits: a, b and c.

It localises to the mitochondrion. The protein resides in the mitochondrion inner membrane. Mitochondrial membrane ATP synthase (F(1)F(0) ATP synthase or Complex V) produces ATP from ADP in the presence of a proton gradient across the membrane which is generated by electron transport complexes of the respiratory chain. F-type ATPases consist of two structural domains, F(1) - containing the extramembraneous catalytic core and F(0) - containing the membrane proton channel, linked together by a central stalk and a peripheral stalk. During catalysis, ATP synthesis in the catalytic domain of F(1) is coupled via a rotary mechanism of the central stalk subunits to proton translocation. Part of the complex F(0) domain and the peripheric stalk, which acts as a stator to hold the catalytic alpha(3)beta(3) subcomplex and subunit a/ATP6 static relative to the rotary elements. This Pisum sativum (Garden pea) protein is ATP synthase subunit O, mitochondrial.